A 159-amino-acid chain; its full sequence is MQEFSHIKDDRAYMVDISNKDTVVRYATASGKIKLHDETVEKIRSGDVEKGNVLATARTAAILAVKRTPDLIPMCHQIPITSVDVEFEIGKSDVTANVEVKSVGRTGVEMEALTGVSVALLTIWDMVKSAEKDNTGNYPSTAIENIHVIRKVKETITNQ.

Substrate contacts are provided by residues 74–76 and 110–111; these read MCH and ME. The active site involves aspartate 125.

Belongs to the MoaC family. As to quaternary structure, homohexamer; trimer of dimers.

The enzyme catalyses (8S)-3',8-cyclo-7,8-dihydroguanosine 5'-triphosphate = cyclic pyranopterin phosphate + diphosphate. It participates in cofactor biosynthesis; molybdopterin biosynthesis. Catalyzes the conversion of (8S)-3',8-cyclo-7,8-dihydroguanosine 5'-triphosphate to cyclic pyranopterin monophosphate (cPMP). This chain is Probable cyclic pyranopterin monophosphate synthase, found in Methanococcoides burtonii (strain DSM 6242 / NBRC 107633 / OCM 468 / ACE-M).